We begin with the raw amino-acid sequence, 696 residues long: Polyphosphate kinase (696 aa).

N45 lines the ATP pocket. The Mg(2+) site is built by R373 and R403. A PLD phosphodiesterase domain is found at 428–462; sequence PGLKIHSKLLMISRREGDDIIRYAHIGTGNFHEKT. H433 (phosphohistidine intermediate) is an active-site residue. Residues Y466, R562, and H590 each coordinate ATP.

Belongs to the polyphosphate kinase 1 (PPK1) family. Mg(2+) is required as a cofactor. In terms of processing, an intermediate of this reaction is the autophosphorylated ppk in which a phosphate is covalently linked to a histidine residue through a N-P bond.

It catalyses the reaction [phosphate](n) + ATP = [phosphate](n+1) + ADP. Catalyzes the reversible transfer of the terminal phosphate of ATP to form a long-chain polyphosphate (polyP). The sequence is that of Polyphosphate kinase from Vibrio parahaemolyticus serotype O3:K6 (strain RIMD 2210633).